The following is a 152-amino-acid chain: Deoxyuridine 5'-triphosphate nucleotidohydrolase (152 aa).

Substrate is bound by residues 62-64 (RSG), asparagine 75, and 79-81 (TVD).

It belongs to the dUTPase family. The cofactor is Mg(2+).

The catalysed reaction is dUTP + H2O = dUMP + diphosphate + H(+). The protein operates within pyrimidine metabolism; dUMP biosynthesis; dUMP from dCTP (dUTP route): step 2/2. In terms of biological role, this enzyme is involved in nucleotide metabolism: it produces dUMP, the immediate precursor of thymidine nucleotides and it decreases the intracellular concentration of dUTP so that uracil cannot be incorporated into DNA. This Leifsonia xyli subsp. xyli (strain CTCB07) protein is Deoxyuridine 5'-triphosphate nucleotidohydrolase.